Reading from the N-terminus, the 835-residue chain is Leucine--tRNA ligase (835 aa).

Positions 36 to 46 match the 'HIGH' region motif; it reads PYPSGKIHVGH. Positions 602–606 match the 'KMSKS' region motif; the sequence is KMSKS. Position 605 (Lys-605) interacts with ATP.

The protein belongs to the class-I aminoacyl-tRNA synthetase family.

It is found in the cytoplasm. It catalyses the reaction tRNA(Leu) + L-leucine + ATP = L-leucyl-tRNA(Leu) + AMP + diphosphate. The polypeptide is Leucine--tRNA ligase (Rickettsia peacockii (strain Rustic)).